Here is a 236-residue protein sequence, read N- to C-terminus: EF-hand domain-containing protein D1 (236 aa).

The interval 1–48 is disordered; it reads MASEELASKLQRRLQWEEGDSGLQPAPGAAPDPEPQPQPPAWAPTARA. Positions 28–42 are enriched in pro residues; the sequence is GAAPDPEPQPQPPAW. EF-hand domains follow at residues 87 to 122 and 123 to 158; these read RLIK…LGAP and QTHL…AAAG. The Ca(2+) site is built by Asp-100, Asp-104, Glu-111, Asp-136, Asp-138, Asp-140, Lys-142, and Glu-147.

It is found in the mitochondrion inner membrane. In terms of biological role, acts as a calcium sensor for mitochondrial flash (mitoflash) activation, an event characterized by stochastic bursts of superoxide production. May play a role in neuronal differentiation. This chain is EF-hand domain-containing protein D1 (EFHD1), found in Bos taurus (Bovine).